A 560-amino-acid polypeptide reads, in one-letter code: OTU domain-containing protein 5-A (560 aa).

Disordered stretches follow at residues 1-100 (MTIL…MACV) and 141-190 (GGGT…QSED). Residues 17 to 32 (DHPDDPDRRTGSDPHQ) are compositionally biased toward basic and acidic residues. Residues 141–163 (GGGTGPGAAGGGGGGGGGGGVGG) are compositionally biased toward gly residues. In terms of domain architecture, OTU spans 211 to 334 (FVIKKMKEDG…NIHYNSVVNP (124 aa)). Positions 216 to 222 (MKEDGAC) are cys-loop. Residue aspartate 219 is part of the active site. Catalysis depends on cysteine 222, which acts as the Nucleophile. The segment at 271 to 281 (KRKNNCHGNHI) is variable-loop. A his-loop region spans residues 322-327 (YHRNIH). Histidine 327 is an active-site residue. Residues 411-496 (ARQPRKASAT…ACVGPDRPTS (86 aa)) form a disordered region. Low complexity-rich tracts occupy residues 417-430 (ASATCSSATAAASS) and 437-448 (ARSPRQRSSAPS).

The protein belongs to the peptidase C85 family.

It catalyses the reaction Thiol-dependent hydrolysis of ester, thioester, amide, peptide and isopeptide bonds formed by the C-terminal Gly of ubiquitin (a 76-residue protein attached to proteins as an intracellular targeting signal).. Deubiquitinating enzyme that may function as negative regulator of the innate immune system. Has peptidase activity towards 'Lys-48'- and 'Lys-63'-linked polyubiquitin chains. Can also cleave 'Lys-11'-linked ubiquitin chains (in vitro). The chain is OTU domain-containing protein 5-A (otud5a) from Danio rerio (Zebrafish).